An 829-amino-acid polypeptide reads, in one-letter code: Probable beta-glucosidase H (829 aa).

Asp-225 is an active-site residue. A PA14 domain is found at 389 to 548 (RMLSNAVIRF…DPEQMVRDAV (160 aa)). N-linked (GlcNAc...) asparagine glycosylation is found at Asn-416, Asn-431, Asn-473, Asn-602, and Asn-627.

The protein belongs to the glycosyl hydrolase 3 family.

It is found in the secreted. It catalyses the reaction Hydrolysis of terminal, non-reducing beta-D-glucosyl residues with release of beta-D-glucose.. The protein operates within glycan metabolism; cellulose degradation. Its function is as follows. Beta-glucosidases are one of a number of cellulolytic enzymes involved in the degradation of cellulosic biomass. Catalyzes the last step releasing glucose from the inhibitory cellobiose. The chain is Probable beta-glucosidase H (bglH) from Aspergillus clavatus (strain ATCC 1007 / CBS 513.65 / DSM 816 / NCTC 3887 / NRRL 1 / QM 1276 / 107).